The sequence spans 202 residues: Cyclin-U4-1 (202 aa).

Belongs to the cyclin family. Cyclin U/P subfamily. As to quaternary structure, interacts with CDKA-1. As to expression, expressed in roots, stems and flowers. Expressed in the shoot apex, leaf primordia and young leaves.

The sequence is that of Cyclin-U4-1 (CYCU4-1) from Arabidopsis thaliana (Mouse-ear cress).